The following is a 248-amino-acid chain: Small ribosomal subunit protein uS2 (248 aa).

This sequence belongs to the universal ribosomal protein uS2 family.

This Janthinobacterium sp. (strain Marseille) (Minibacterium massiliensis) protein is Small ribosomal subunit protein uS2.